The sequence spans 238 residues: 14-3-3 protein 2 (238 aa).

It belongs to the 14-3-3 family.

Probable adapter protein. This is 14-3-3 protein 2 from Entamoeba histolytica (strain ATCC 30459 / HM-1:IMSS / ABRM).